Consider the following 315-residue polypeptide: MAPPSLPCGIYAPTMTFFHPESEDIDIPTIKHHAQRLAKAGLAGLVVMGSNGEAVHCTRDEKIAVLSATREALDAAGFQSVPVLFGATEGSVRGTIELCKLAAAAGAAAALVLPPSYYRAQTDEASIEAYFVAVADASPIPLVLYNYPGAVSGIDMDSDLLIRLAQHKNIVGTKFTCGNTGKLTRVALATDAKTPFRDGSGYMAFGGMCDFTLQTLVSGGSGIIAGGANVMPKLCVKVWDSYSQGNRDEAEKLQKVLSRGDWPLTKAAIAGTKSAIQTYYGYGGYPRRPLKRLEQARVSAIEEGIREAMEIEKTL.

50–51 (SN) serves as a coordination point for substrate. Residue Lys-174 is the Schiff-base intermediate with substrate of the active site.

It belongs to the DapA family.

The catalysed reaction is 2-dehydro-3-deoxy-L-galactonate = L-glyceraldehyde + pyruvate. It functions in the pathway carbohydrate acid metabolism. Functionally, mediates the conversion of 2-dehydro-3-deoxy-L-galactonate to pyruvate and L-glyceraldehyde in D-galacturonate catabolic process. The protein is L-threo-3-deoxy-hexylosonate aldolase (lga1) of Hypocrea jecorina (Trichoderma reesei).